Reading from the N-terminus, the 238-residue chain is Uridylate kinase (238 aa).

An ATP-binding site is contributed by 10-13; it reads KFSG. The interval 18-23 is involved in allosteric activation by GTP; it reads GENGFG. UMP is bound at residue Gly52. Residues Gly53 and Arg57 each contribute to the ATP site. UMP is bound by residues Asp73 and 134–141; that span reads TGNPFFTT. ATP contacts are provided by Thr161, Tyr167, and Asp170.

Belongs to the UMP kinase family. Homohexamer.

The protein localises to the cytoplasm. The enzyme catalyses UMP + ATP = UDP + ADP. It participates in pyrimidine metabolism; CTP biosynthesis via de novo pathway; UDP from UMP (UMPK route): step 1/1. Allosterically activated by GTP. Inhibited by UTP. In terms of biological role, catalyzes the reversible phosphorylation of UMP to UDP. The chain is Uridylate kinase from Campylobacter concisus (strain 13826).